A 191-amino-acid chain; its full sequence is Fe/S biogenesis protein NfuA (191 aa).

Positions 149 and 152 each coordinate [4Fe-4S] cluster.

Belongs to the NfuA family. As to quaternary structure, homodimer. It depends on [4Fe-4S] cluster as a cofactor.

Involved in iron-sulfur cluster biogenesis. Binds a 4Fe-4S cluster, can transfer this cluster to apoproteins, and thereby intervenes in the maturation of Fe/S proteins. Could also act as a scaffold/chaperone for damaged Fe/S proteins. The protein is Fe/S biogenesis protein NfuA of Hamiltonella defensa subsp. Acyrthosiphon pisum (strain 5AT).